The chain runs to 350 residues: (RS)-norcoclaurine 6-O-methyltransferase (350 aa).

S-adenosyl-L-methionine is bound at residue Met-166. A substrate-binding site is contributed by Asp-169. S-adenosyl-L-methionine-binding positions include Thr-170, Gly-195, Asp-218, Asp-238–Met-239, and Lys-252. Substrate is bound by residues Cys-253–Asp-257 and Asp-306. His-256 functions as the Proton acceptor in the catalytic mechanism.

This sequence belongs to the class I-like SAM-binding methyltransferase superfamily. Cation-independent O-methyltransferase family. COMT subfamily. As to quaternary structure, homodimer. As to expression, expressed in leaf primordia of rhizomes and root endodermis.

The catalysed reaction is (S)-norcoclaurine + S-adenosyl-L-methionine = (S)-coclaurine + S-adenosyl-L-homocysteine + H(+). It carries out the reaction norcoclaurine + S-adenosyl-L-methionine = coclaurine + S-adenosyl-L-homocysteine + H(+). Inhibited by sanguinarine. In terms of biological role, involved in the biosynthesis of coclaurine, a precursor of benzylisoquinoline alkaloids. Catalyzes the transfer of the S-methyl group of S-adenosyl-L-methionine (AdoMet) to the 6-hydroxyl group of norcoclaurine to form coclaurine. This chain is (RS)-norcoclaurine 6-O-methyltransferase, found in Thalictrum flavum subsp. glaucum (Yellow meadow rue).